A 266-amino-acid polypeptide reads, in one-letter code: uncharacterized protein (266 aa).

It belongs to the ascovirus HvAV ORF59 family.

This is an uncharacterized protein from Trichoplusia ni ascovirus 2c (TnAV-2c).